Reading from the N-terminus, the 247-residue chain is 3-deoxy-manno-octulosonate cytidylyltransferase (247 aa).

The protein belongs to the KdsB family.

It is found in the cytoplasm. It carries out the reaction 3-deoxy-alpha-D-manno-oct-2-ulosonate + CTP = CMP-3-deoxy-beta-D-manno-octulosonate + diphosphate. It participates in nucleotide-sugar biosynthesis; CMP-3-deoxy-D-manno-octulosonate biosynthesis; CMP-3-deoxy-D-manno-octulosonate from 3-deoxy-D-manno-octulosonate and CTP: step 1/1. It functions in the pathway bacterial outer membrane biogenesis; lipopolysaccharide biosynthesis. Its function is as follows. Activates KDO (a required 8-carbon sugar) for incorporation into bacterial lipopolysaccharide in Gram-negative bacteria. This is 3-deoxy-manno-octulosonate cytidylyltransferase from Afipia carboxidovorans (strain ATCC 49405 / DSM 1227 / KCTC 32145 / OM5) (Oligotropha carboxidovorans).